The primary structure comprises 313 residues: Homoserine kinase (313 aa).

Proline 92–alanine 102 lines the ATP pocket.

Belongs to the GHMP kinase family. Homoserine kinase subfamily.

It is found in the cytoplasm. It catalyses the reaction L-homoserine + ATP = O-phospho-L-homoserine + ADP + H(+). It functions in the pathway amino-acid biosynthesis; L-threonine biosynthesis; L-threonine from L-aspartate: step 4/5. In terms of biological role, catalyzes the ATP-dependent phosphorylation of L-homoserine to L-homoserine phosphate. This chain is Homoserine kinase, found in Aeropyrum pernix (strain ATCC 700893 / DSM 11879 / JCM 9820 / NBRC 100138 / K1).